The sequence spans 446 residues: 3-phosphoshikimate 1-carboxyvinyltransferase (446 aa).

K21, S22, and R26 together coordinate 3-phosphoshikimate. K21 is a binding site for phosphoenolpyruvate. Phosphoenolpyruvate-binding residues include G94 and R122. Residues S167, Q169, D315, and K342 each coordinate 3-phosphoshikimate. Q169 provides a ligand contact to phosphoenolpyruvate. Catalysis depends on D315, which acts as the Proton acceptor. Phosphoenolpyruvate-binding residues include R346 and R388.

Belongs to the EPSP synthase family. In terms of assembly, monomer.

It localises to the cytoplasm. The enzyme catalyses 3-phosphoshikimate + phosphoenolpyruvate = 5-O-(1-carboxyvinyl)-3-phosphoshikimate + phosphate. Its pathway is metabolic intermediate biosynthesis; chorismate biosynthesis; chorismate from D-erythrose 4-phosphate and phosphoenolpyruvate: step 6/7. In terms of biological role, catalyzes the transfer of the enolpyruvyl moiety of phosphoenolpyruvate (PEP) to the 5-hydroxyl of shikimate-3-phosphate (S3P) to produce enolpyruvyl shikimate-3-phosphate and inorganic phosphate. The chain is 3-phosphoshikimate 1-carboxyvinyltransferase from Alkalilimnicola ehrlichii (strain ATCC BAA-1101 / DSM 17681 / MLHE-1).